A 390-amino-acid polypeptide reads, in one-letter code: Methionyl-tRNA formyltransferase, mitochondrial (390 aa).

The transit peptide at 1 to 33 (MRVLLRCCCGHLPVGGGAGRRSNPRWRALARLS) directs the protein to the mitochondrion.

Belongs to the Fmt family.

Its subcellular location is the mitochondrion. It carries out the reaction L-methionyl-tRNA(fMet) + (6R)-10-formyltetrahydrofolate = N-formyl-L-methionyl-tRNA(fMet) + (6S)-5,6,7,8-tetrahydrofolate + H(+). In terms of biological role, methionyl-tRNA formyltransferase that formylates methionyl-tRNA in mitochondria and is crucial for translation initiation. This Bos taurus (Bovine) protein is Methionyl-tRNA formyltransferase, mitochondrial (MTFMT).